The following is a 179-amino-acid chain: Stathmin-2 (179 aa).

The tract at residues 1–26 (MAKTAMAYKEKMKELSMLSLICSCFY) is membrane attachment. The residue at position 16 (Ser16) is a Phosphoserine. Residues Cys22 and Cys24 are each lipidated (S-palmitoyl cysteine). One can recognise an SLD domain in the interval 38 to 179 (DDMEVKQINK…NKELQVELSG (142 aa)). Residues 39–96 (DMEVKQINKRASGQAFELILKPPSPISEAPRTLASPKKKDLSLEEIQKKLEAAEGRRK) form a regulatory/phosphorylation domain region. Position 50 is a phosphoserine (Ser50). Residues Ser62 and Ser73 each carry the phosphoserine; by MAPK8 modification. The stretch at 75–179 (KKKDLSLEEI…NKELQVELSG (105 aa)) forms a coiled coil. Ser80 and Ser97 each carry phosphoserine.

This sequence belongs to the stathmin family. Interacts with ITM2C. Interacts with MAPK8. Interacts with KIFBP. Interacts (via the N-terminal region) with CIB1 (via C-terminal region); the interaction is direct, occurs in a calcium-dependent manner and attenuates the neurite outgrowth inhibition of STMN2. In terms of processing, sumoylated. Phosphorylated by MAPK9 and MAPK10 in the developing brain cortex. Phosphorylated mostly by MAPK8. Post-translationally, N-terminal palmitoylation promotes specific anchoring to the cytosolic leaflet of Golgi membranes and subsequent vesicular trafficking along dendrites and axons. Neuronal Stathmins are substrates for palmitoyltransferases ZDHHC3, ZDHHC7 and ZDHHC15. As to expression, expressed in neurons (at protein level). Present in growth cones and abundant in developing neurons.

The protein resides in the cytoplasm. It localises to the perinuclear region. It is found in the cell projection. Its subcellular location is the growth cone. The protein localises to the axon. The protein resides in the membrane. It localises to the golgi apparatus. It is found in the endosome. Its subcellular location is the lamellipodium. Its function is as follows. Regulator of microtubule stability. When phosphorylated by MAPK8, stabilizes microtubules and consequently controls neurite length in cortical neurons. In the developing brain, negatively regulates the rate of exit from multipolar stage and retards radial migration from the ventricular zone. In Rattus norvegicus (Rat), this protein is Stathmin-2 (Stmn2).